The primary structure comprises 97 residues: Cytochrome c2 iso-2 (97 aa).

Residues cysteine 10, cysteine 13, histidine 14, and methionine 75 each coordinate heme c.

The protein belongs to the cytochrome c family. Post-translationally, binds 1 heme c group covalently per subunit.

In terms of biological role, cytochrome c2 is found mainly in purple, non-sulfur, photosynthetic bacteria where it functions as the electron donor to the oxidized bacteriochlorophyll in the photophosphorylation pathway. However, it may also have a role in the respiratory chain and is found in some non-photosynthetic bacteria. The chain is Cytochrome c2 iso-2 from Magnetospirillum molischianum (Rhodospirillum molischianum).